Consider the following 172-residue polypeptide: Adenine phosphoribosyltransferase (172 aa).

The protein belongs to the purine/pyrimidine phosphoribosyltransferase family. As to quaternary structure, homodimer.

Its subcellular location is the cytoplasm. It catalyses the reaction AMP + diphosphate = 5-phospho-alpha-D-ribose 1-diphosphate + adenine. It functions in the pathway purine metabolism; AMP biosynthesis via salvage pathway; AMP from adenine: step 1/1. In terms of biological role, catalyzes a salvage reaction resulting in the formation of AMP, that is energically less costly than de novo synthesis. The protein is Adenine phosphoribosyltransferase of Streptococcus pyogenes serotype M5 (strain Manfredo).